The primary structure comprises 182 residues: Dual-action ribosomal maturation protein DarP (182 aa).

The tract at residues 1–20 is disordered; it reads MNKQPEEWQDPQSLQQQDDE.

Belongs to the DarP family.

It localises to the cytoplasm. In terms of biological role, member of a network of 50S ribosomal subunit biogenesis factors which assembles along the 30S-50S interface, preventing incorrect 23S rRNA structures from forming. Promotes peptidyl transferase center (PTC) maturation. The chain is Dual-action ribosomal maturation protein DarP from Sodalis glossinidius (strain morsitans).